Consider the following 420-residue polypeptide: Putative competence-damage inducible protein (420 aa).

This sequence belongs to the CinA family.

The protein is Putative competence-damage inducible protein of Lactiplantibacillus plantarum (strain ATCC BAA-793 / NCIMB 8826 / WCFS1) (Lactobacillus plantarum).